A 196-amino-acid polypeptide reads, in one-letter code: Ribonuclease HII (196 aa).

The 188-residue stretch at 9-196 folds into the RNase H type-2 domain; that stretch reads KLVAGVDEVG…KPVRHALGIE (188 aa). The a divalent metal cation site is built by Asp-15, Glu-16, and Asp-107.

It belongs to the RNase HII family. Mn(2+) is required as a cofactor. It depends on Mg(2+) as a cofactor.

It is found in the cytoplasm. The enzyme catalyses Endonucleolytic cleavage to 5'-phosphomonoester.. Its function is as follows. Endonuclease that specifically degrades the RNA of RNA-DNA hybrids. This is Ribonuclease HII from Aeromonas salmonicida (strain A449).